A 378-amino-acid polypeptide reads, in one-letter code: D-alanine--D-alanine ligase (378 aa).

In terms of domain architecture, ATP-grasp spans 140-346 (KKIISQAGIR…YSDLIDRLIQ (207 aa)). 170–225 (EEKLGNLTFVKPAKQGSSVGIHRVTNAEEYEKALDDAFKYDYKILVEQGIANPQEI) provides a ligand contact to ATP. Positions 300, 313, and 315 each coordinate Mg(2+).

It belongs to the D-alanine--D-alanine ligase family. Mg(2+) is required as a cofactor. Requires Mn(2+) as cofactor.

It localises to the cytoplasm. The enzyme catalyses 2 D-alanine + ATP = D-alanyl-D-alanine + ADP + phosphate + H(+). It functions in the pathway cell wall biogenesis; peptidoglycan biosynthesis. Functionally, cell wall formation. The chain is D-alanine--D-alanine ligase from Limosilactobacillus reuteri (strain DSM 20016) (Lactobacillus reuteri).